A 273-amino-acid polypeptide reads, in one-letter code: MSLQNIIETAFENRADITPTTVTPEVKEAVLETIRQLDSGKLRVAERLGVGEWKVNEWAKKAVLLSFRIQDNEVLNDGVNKYFDKVPTKFADWSEDEFKNAGFRAVPGAVARRGSFVAKNVVLMPSYVNIGAYVDEGAMVDTWATVGSCAQIGKNVHLSGGVGIGGVLEPLQAAPTIIEDNCFIGARSEIVEGVIVEEGSVISMGVFIGQSTKIFDRTTGEIYQGRVPTGSVVVSGSMPSKDGSHSLYCAVIVKRVDAQTRAKTSVNELLRGI.

Residues Arg-104 and Asp-141 each contribute to the substrate site.

This sequence belongs to the transferase hexapeptide repeat family. In terms of assembly, homotrimer.

The protein resides in the cytoplasm. The enzyme catalyses (S)-2,3,4,5-tetrahydrodipicolinate + succinyl-CoA + H2O = (S)-2-succinylamino-6-oxoheptanedioate + CoA. It functions in the pathway amino-acid biosynthesis; L-lysine biosynthesis via DAP pathway; LL-2,6-diaminopimelate from (S)-tetrahydrodipicolinate (succinylase route): step 1/3. This is 2,3,4,5-tetrahydropyridine-2,6-dicarboxylate N-succinyltransferase from Neisseria meningitidis serogroup C (strain 053442).